The primary structure comprises 395 residues: Ribosomal RNA large subunit methyltransferase G (395 aa).

It belongs to the methyltransferase superfamily. RlmG family.

It is found in the cytoplasm. The catalysed reaction is guanosine(1835) in 23S rRNA + S-adenosyl-L-methionine = N(2)-methylguanosine(1835) in 23S rRNA + S-adenosyl-L-homocysteine + H(+). In terms of biological role, specifically methylates the guanine in position 1835 (m2G1835) of 23S rRNA. In Yersinia pseudotuberculosis serotype O:1b (strain IP 31758), this protein is Ribosomal RNA large subunit methyltransferase G.